The sequence spans 574 residues: C6 finger transcription factor poxB (574 aa).

The segment at residues Cys19–Cys51 is a DNA-binding region (zn(2)-C6 fungal-type). Disordered stretches follow at residues Pro111–Arg133, Ser242–His262, and Leu376–Ala404.

It localises to the nucleus. Functionally, transcription factor that positively regulates the expression of the gene cluster that mediates the biosynthesis of oxaleimides, cytotoxic compounds containing an unusual disubstituted succinimide moiety. The sequence is that of C6 finger transcription factor poxB from Penicillium oxalicum.